We begin with the raw amino-acid sequence, 236 residues long: Ubiquinone biosynthesis O-methyltransferase (236 aa).

Residues Arg40, Gly59, Asp80, and Leu124 each contribute to the S-adenosyl-L-methionine site.

The protein belongs to the methyltransferase superfamily. UbiG/COQ3 family.

The catalysed reaction is a 3-demethylubiquinol + S-adenosyl-L-methionine = a ubiquinol + S-adenosyl-L-homocysteine + H(+). It carries out the reaction a 3-(all-trans-polyprenyl)benzene-1,2-diol + S-adenosyl-L-methionine = a 2-methoxy-6-(all-trans-polyprenyl)phenol + S-adenosyl-L-homocysteine + H(+). The protein operates within cofactor biosynthesis; ubiquinone biosynthesis. Its function is as follows. O-methyltransferase that catalyzes the 2 O-methylation steps in the ubiquinone biosynthetic pathway. In Nitrosococcus oceani (strain ATCC 19707 / BCRC 17464 / JCM 30415 / NCIMB 11848 / C-107), this protein is Ubiquinone biosynthesis O-methyltransferase.